Consider the following 307-residue polypeptide: Elongation factor Ts (307 aa).

Residues 80–83 (TDFV) are involved in Mg(2+) ion dislocation from EF-Tu.

Belongs to the EF-Ts family.

It is found in the cytoplasm. In terms of biological role, associates with the EF-Tu.GDP complex and induces the exchange of GDP to GTP. It remains bound to the aminoacyl-tRNA.EF-Tu.GTP complex up to the GTP hydrolysis stage on the ribosome. This is Elongation factor Ts from Bradyrhizobium sp. (strain ORS 278).